A 170-amino-acid chain; its full sequence is Large ribosomal subunit protein uL10 (170 aa).

This sequence belongs to the universal ribosomal protein uL10 family. In terms of assembly, part of the ribosomal stalk of the 50S ribosomal subunit. The N-terminus interacts with L11 and the large rRNA to form the base of the stalk. The C-terminus forms an elongated spine to which L12 dimers bind in a sequential fashion forming a multimeric L10(L12)X complex.

Functionally, forms part of the ribosomal stalk, playing a central role in the interaction of the ribosome with GTP-bound translation factors. The chain is Large ribosomal subunit protein uL10 from Lactobacillus acidophilus (strain ATCC 700396 / NCK56 / N2 / NCFM).